The chain runs to 183 residues: Apo-citrate lyase phosphoribosyl-dephospho-CoA transferase (183 aa).

The protein belongs to the CitX family.

The enzyme catalyses apo-[citrate lyase ACP] + 2'-(5''-triphospho-alpha-D-ribosyl)-3'-dephospho-CoA = holo-[citrate lyase ACP] + diphosphate. In terms of biological role, transfers 2-(5''-triphosphoribosyl)-3'-dephosphocoenzyme-A on a serine residue to the apo-acyl carrier protein (gamma chain) of the citrate lyase to yield holo-acyl carrier protein. In Escherichia coli O6:K15:H31 (strain 536 / UPEC), this protein is Apo-citrate lyase phosphoribosyl-dephospho-CoA transferase.